We begin with the raw amino-acid sequence, 202 residues long: Endothelin-1 (202 aa).

The first 25 residues, 1–25, serve as a signal peptide directing secretion; sequence MDYFPMIFALLFVAFQGAPEAAVLG. Positions 26–50 are excised as a propeptide; it reads TELSTGAESGGERPVPTTPWRPRRS. The disordered stretch occupies residues 29–48; it reads STGAESGGERPVPTTPWRPR. Disulfide bonds link Cys53–Cys67 and Cys55–Cys63. The propeptide occupies 74–202; it reads VNTPEHVVPY…DKKVIYSRAH (129 aa). Positions 110-124 are endothelin-like; it reads CQCASQTDKKCQNFC.

Belongs to the endothelin/sarafotoxin family.

The protein resides in the secreted. In terms of biological role, endothelins are endothelium-derived vasoconstrictor peptides. Probable ligand for G-protein coupled receptors EDNRA and EDNRB which activates PTK2B, BCAR1, BCAR3 and, GTPases RAP1 and RHOA cascade in glomerular mesangial cells. Also binds the DEAR/FBXW7-AS1 receptor. Promotes mesenteric arterial wall remodeling via activation of ROCK signaling and subsequent colocalization of NFATC3 with F-actin filaments. NFATC3 then translocates to the nucleus where it subsequently promotes the transcription of the smooth muscle hypertrophy and differentiation marker ACTA2. This chain is Endothelin-1 (EDN1), found in Ovis aries (Sheep).